A 527-amino-acid polypeptide reads, in one-letter code: Peptide chain release factor 3 (527 aa).

Positions 9-277 (AKRRTFAIIS…AVVNWAPKPL (269 aa)) constitute a tr-type G domain. GTP contacts are provided by residues 18-25 (SHPDAGKT), 86-90 (DTPGH), and 140-143 (NKLD).

This sequence belongs to the TRAFAC class translation factor GTPase superfamily. Classic translation factor GTPase family. PrfC subfamily.

Its subcellular location is the cytoplasm. Increases the formation of ribosomal termination complexes and stimulates activities of RF-1 and RF-2. It binds guanine nucleotides and has strong preference for UGA stop codons. It may interact directly with the ribosome. The stimulation of RF-1 and RF-2 is significantly reduced by GTP and GDP, but not by GMP. This Pseudomonas syringae pv. syringae (strain B728a) protein is Peptide chain release factor 3.